Here is a 133-residue protein sequence, read N- to C-terminus: Homeobox protein HD-5 (133 aa).

A DNA-binding region (homeobox) is located at residues 34–93; sequence SKRSRLKLSGQQIDVLESNFKIDSHPNSATKSLLSNALSIPLKNIQIWFQNRRAKEKTAR. A disordered region spans residues 86–109; it reads RAKEKTARDGGRRRSGNAEIEDGE.

It localises to the nucleus. This is Homeobox protein HD-5 (HD-5) from Encephalitozoon cuniculi (strain GB-M1) (Microsporidian parasite).